Consider the following 275-residue polypeptide: ATP synthase subunit a (275 aa).

Helical transmembrane passes span 46–66 (RLMLIRLLMSVLVAAFFVIAM), 104–124 (FLPVITTIFFIVVASNMASII), 135–155 (IGMPLVLAALAYIVFNYVGIK), 166–186 (SIVVPGVPLPLHFLLVPIEFI), 204–224 (MLAGHILLVLFFSATNYFFFV), 231–251 (IFGVPSIIAGIAFTFFELLVI), and 252–272 (FLQAYVFALLTAVYIELALHA).

It belongs to the ATPase A chain family. In terms of assembly, F-type ATPases have 2 components, CF(1) - the catalytic core - and CF(0) - the membrane proton channel. CF(1) has five subunits: alpha(3), beta(3), gamma(1), delta(1), epsilon(1). CF(0) has three main subunits: a(1), b(2) and c(9-12). The alpha and beta chains form an alternating ring which encloses part of the gamma chain. CF(1) is attached to CF(0) by a central stalk formed by the gamma and epsilon chains, while a peripheral stalk is formed by the delta and b chains.

The protein localises to the cell membrane. Functionally, key component of the proton channel; it plays a direct role in the translocation of protons across the membrane. The polypeptide is ATP synthase subunit a (Rhodococcus erythropolis (strain PR4 / NBRC 100887)).